We begin with the raw amino-acid sequence, 482 residues long: Putative metallophosphoesterase F40B5.2 (482 aa).

4 helical membrane-spanning segments follow: residues 15 to 35, 129 to 149, 156 to 176, and 205 to 225; these read MNLK…SIAI, ALMM…YIFL, IAIT…FLLI, and CYHI…GLYT. Positions 256, 258, 288, 319, 421, and 423 each coordinate a divalent metal cation.

The protein belongs to the metallophosphoesterase superfamily. LOC643853 family.

The protein localises to the membrane. In Caenorhabditis elegans, this protein is Putative metallophosphoesterase F40B5.2.